The primary structure comprises 101 residues: Glutaredoxin-1 (101 aa).

One can recognise a Glutaredoxin domain in the interval Lys5–Leu101. A disulfide bridge connects residues Cys25 and Cys28.

The protein belongs to the glutaredoxin family.

It is found in the cytoplasm. Its subcellular location is the cytosol. In terms of biological role, multifunctional enzyme with glutathione-dependent oxidoreductase, glutathione peroxidase and glutathione S-transferase (GST) activity. The disulfide bond functions as an electron carrier in the glutathione-dependent synthesis of deoxyribonucleotides by the enzyme ribonucleotide reductase. In addition, it is also involved in reducing cytosolic protein- and non-protein-disulfides in a coupled system with glutathione reductase. May play a role in protection against oxidative stress caused by superoxide in vivo by regulating the redox state of the protein sulfhydryl groups. In Rhizophagus irregularis (strain DAOM 181602 / DAOM 197198 / MUCL 43194) (Arbuscular mycorrhizal fungus), this protein is Glutaredoxin-1.